The primary structure comprises 421 residues: Flap endonuclease 1 (421 aa).

Residues Met1 to Arg109 form an N-domain region. Asp34 is a Mg(2+) binding site. Residues Arg47 and Arg75 each coordinate DNA. Mg(2+)-binding residues include Asp91, Glu163, Glu165, Asp184, and Asp186. Positions Glu127–His258 are I-domain. Residue Glu163 coordinates DNA. DNA-binding residues include Gly236 and Asp238. Asp238 serves as a coordination point for Mg(2+). The segment at Lys284 to Asn307 is disordered. The segment covering Gln289–Val298 has biased composition (acidic residues). Positions Pro379–Phe387 are interaction with PCNA. The segment at Ser398–His421 is disordered.

It belongs to the XPG/RAD2 endonuclease family. FEN1 subfamily. Interacts with PCNA. Three molecules of FEN1 bind to one PCNA trimer with each molecule binding to one PCNA monomer. PCNA stimulates the nuclease activity without altering cleavage specificity. Mg(2+) is required as a cofactor. In terms of processing, phosphorylated. Phosphorylation upon DNA damage induces relocalization to the nuclear plasma.

The protein resides in the nucleus. The protein localises to the nucleolus. It localises to the nucleoplasm. Its subcellular location is the mitochondrion. Structure-specific nuclease with 5'-flap endonuclease and 5'-3' exonuclease activities involved in DNA replication and repair. During DNA replication, cleaves the 5'-overhanging flap structure that is generated by displacement synthesis when DNA polymerase encounters the 5'-end of a downstream Okazaki fragment. It enters the flap from the 5'-end and then tracks to cleave the flap base, leaving a nick for ligation. Also involved in the long patch base excision repair (LP-BER) pathway, by cleaving within the apurinic/apyrimidinic (AP) site-terminated flap. Acts as a genome stabilization factor that prevents flaps from equilibrating into structures that lead to duplications and deletions. Also possesses 5'-3' exonuclease activity on nicked or gapped double-stranded DNA, and exhibits RNase H activity. Also involved in replication and repair of rDNA and in repairing mitochondrial DNA. This Phaeodactylum tricornutum (strain CCAP 1055/1) protein is Flap endonuclease 1.